Consider the following 266-residue polypeptide: Glucosamine-6-phosphate deaminase (266 aa).

Asp72 functions as the Proton acceptor; for enolization step in the catalytic mechanism. Asp141 acts as the For ring-opening step in catalysis. His143 serves as the catalytic Proton acceptor; for ring-opening step. Glu148 functions as the For ring-opening step in the catalytic mechanism.

This sequence belongs to the glucosamine/galactosamine-6-phosphate isomerase family. NagB subfamily. Homohexamer.

The catalysed reaction is alpha-D-glucosamine 6-phosphate + H2O = beta-D-fructose 6-phosphate + NH4(+). The protein operates within amino-sugar metabolism; N-acetylneuraminate degradation; D-fructose 6-phosphate from N-acetylneuraminate: step 5/5. With respect to regulation, allosterically activated by N-acetylglucosamine 6-phosphate (GlcNAc6P). Catalyzes the reversible isomerization-deamination of glucosamine 6-phosphate (GlcN6P) to form fructose 6-phosphate (Fru6P) and ammonium ion. The chain is Glucosamine-6-phosphate deaminase from Aliivibrio salmonicida (strain LFI1238) (Vibrio salmonicida (strain LFI1238)).